We begin with the raw amino-acid sequence, 661 residues long: Transketolase (661 aa).

An N-acetylserine modification is found at Ser-2. His-31 is a substrate binding site. Thiamine diphosphate-binding positions include His-71 and 119–121 (GPL). A Mg(2+)-binding site is contributed by Asp-160. Thiamine diphosphate-binding residues include Gly-161 and Asn-190. Mg(2+)-binding residues include Asn-190 and Val-192. Residues His-267, Arg-359, and Ser-386 each coordinate substrate. His-267 lines the thiamine diphosphate pocket. The active-site Proton donor is Glu-413. Phe-439 is a binding site for thiamine diphosphate. Residues His-463, Asp-471, and Arg-522 each coordinate substrate.

This sequence belongs to the transketolase family. In terms of assembly, homodimer. Mg(2+) serves as cofactor. Ca(2+) is required as a cofactor. Requires Mn(2+) as cofactor. It depends on Co(2+) as a cofactor. The cofactor is thiamine diphosphate.

The enzyme catalyses D-sedoheptulose 7-phosphate + D-glyceraldehyde 3-phosphate = aldehydo-D-ribose 5-phosphate + D-xylulose 5-phosphate. In terms of biological role, catalyzes the transfer of a two-carbon ketol group from a ketose donor to an aldose acceptor, via a covalent intermediate with the cofactor thiamine pyrophosphate. This Dictyostelium discoideum (Social amoeba) protein is Transketolase (tkt-1).